We begin with the raw amino-acid sequence, 969 residues long: RNA polymerase-associated protein RapA (969 aa).

The 171-residue stretch at 164-334 folds into the Helicase ATP-binding domain; the sequence is EVGRRYAPRV…FARLRLLDPD (171 aa). An ATP-binding site is contributed by 177–184; sequence DEVGLGKT. Residues 280-283 carry the DEAH box motif; it reads DEAH. A Helicase C-terminal domain is found at 492–668; that stretch reads RVNWLLELLK…GKSDGLESLI (177 aa).

This sequence belongs to the SNF2/RAD54 helicase family. RapA subfamily. Interacts with the RNAP. Has a higher affinity for the core RNAP than for the holoenzyme. Its ATPase activity is stimulated by binding to RNAP.

Transcription regulator that activates transcription by stimulating RNA polymerase (RNAP) recycling in case of stress conditions such as supercoiled DNA or high salt concentrations. Probably acts by releasing the RNAP, when it is trapped or immobilized on tightly supercoiled DNA. Does not activate transcription on linear DNA. Probably not involved in DNA repair. This Aliivibrio fischeri (strain MJ11) (Vibrio fischeri) protein is RNA polymerase-associated protein RapA.